Here is a 215-residue protein sequence, read N- to C-terminus: C-type lectin domain family 4 member D (215 aa).

Over 1 to 17 (MGLEKPQSKLEGGMHPQ) the chain is Cytoplasmic. Residues 18 to 38 (LIPSVIAVVFILLLSVCFIAS) traverse the membrane as a helical; Signal-anchor for type II membrane protein segment. The Extracellular portion of the chain corresponds to 39–215 (CLVTHHNFSR…ICKIPGTTLN (177 aa)). A glycan (N-linked (GlcNAc...) asparagine) is linked at asparagine 45. A disulfide bond links cysteine 84 and cysteine 95. The C-type lectin domain occupies 91–208 (FQSNCYFPLT…CNFEASRICK (118 aa)). 2 N-linked (GlcNAc...) asparagine glycosylation sites follow: asparagine 102 and asparagine 111. 2 disulfide bridges follow: cysteine 112/cysteine 207 and cysteine 182/cysteine 199. Residues glutamate 173, aspartate 175, asparagine 195, and aspartate 196 each coordinate Ca(2+).

As to quaternary structure, heterodimer with CLEC4E; disulfide-linked. CLEC4E acts as a bridge for interaction between CLEC4D and FCER1G to form a functional complex. Heterodimer with CLEC6A; this heterodimer forms a pattern recognition receptor (PRR) against fungal infection. As to expression, expressed weakly in peripheral blood leukocytes, bone marrow and spleen. Expression is confined mostly in monocytes and macrophage and seems to be up-regulated by IL-6, IL-10, TNF-alpha and IFN-gamma.

It is found in the cell membrane. In terms of biological role, calcium-dependent lectin that acts as a pattern recognition receptor (PRR) of the innate immune system: recognizes damage-associated molecular patterns (DAMPs) of pathogen-associated molecular patterns (PAMPs) of bacteria and fungi. The PAMPs include alpha-mannans on C.albicans hypheas and mycobacterial trehalose 6,6'-dimycolate (TDM). Interacts with signaling adapter Fc receptor gamma chain/FCER1G, likely via CLEC4E, to form a functional complex in myeloid cells. Binding of mycobacterial TDM or C.albicans alpha-mannans to this receptor complex leads to phosphorylation of the immunoreceptor tyrosine-based activation motif (ITAM) of FCER1G, triggering activation of SYK, CARD9 and NF-kappa-B, consequently driving maturation of antigen-presenting cells and shaping antigen-specific priming of T-cells toward effector T-helper 1 and T-helper 17 cell subtypes. The heterodimer formed with CLEC6A is active against fungal infection. Functions as an endocytic receptor. May be involved in antigen uptake at the site of infection, either for clearance of the antigen, or for processing and further presentation to T-cells. The polypeptide is C-type lectin domain family 4 member D (Homo sapiens (Human)).